The primary structure comprises 263 residues: Polyglutamine-binding protein 1 (263 aa).

The region spanning 46-80 is the WW domain; sequence EGLPPSWYKVFDPSCGLPYYWNVDTDLVSWLSPHD. The residue at position 94 (serine 94) is a Phosphoserine. Residues 94–263 are disordered; it reads SSNADAEEKL…AEASRTKQQD (170 aa). The segment covering 99–173 has biased composition (basic and acidic residues); it reads AEEKLDRSHE…DKVDREESKE (75 aa). A run of 14 repeats spans residues 104-110, 111-117, 118-124, 125-131, 132-138, 139-140, 141-142, 143-144, 150-151, 152-153, 154-155, 156-157, 158-159, and 160-161. The segment at 104 to 138 is 5 X 7 AA approximate tandem repeats of D-R-[SG]-H-D-K-S; it reads DRSHEKSDRGHEKSDRGHEKSDRSHEKSERNHEKS. The interval 139-144 is 3 X 2 AA tandem repeats of [DE]-R; that stretch reads DRDRER. Residues 150–161 form a 6 X 2 AA tandem repeats of [DE]-R region; the sequence is DRERERDRDRDR. Residues 243–253 are important for interaction with TXNL4A; it reads YPSPGAVLRAN. At serine 245 the chain carries Phosphoserine.

Interacts with POU3F2/Brn-2, ATXN1, TXNL4A, HTT and AR. Interaction with ATXN1 correlates positively with the length of the polyglutamine tract. Interacts with RNA polymerase II large subunit in a phosphorylation-dependent manner. Forms a ternary complex with ATXN1 mutant and phosphorylated RNA polymerase II. Interacts (via C-terminus) with TXNL4A and CD2BP2. Interacts (via WW domain) with ATN1 and SF3B1, and may interact with additional splice factors. Interacts (via WW domain) with WBP11; Leading to reduce interaction between PQBP1 and TXNL4A. Interacts with CAPRIN1. Interacts with DDX1. Interacts with SFPQ. Interacts with KHSRP.

The protein localises to the nucleus. Its subcellular location is the nucleus speckle. The protein resides in the cytoplasmic granule. Functionally, intrinsically disordered protein that acts as a scaffold, and which is involved in different processes, such as pre-mRNA splicing, transcription regulation, innate immunity and neuron development. Interacts with splicing-related factors via the intrinsically disordered region and regulates alternative splicing of target pre-mRNA species. May suppress the ability of POU3F2 to transactivate the DRD1 gene in a POU3F2 dependent manner. Can activate transcription directly or via association with the transcription machinery. May be involved in ATXN1 mutant-induced cell death. The interaction with ATXN1 mutant reduces levels of phosphorylated RNA polymerase II large subunit. Involved in the assembly of cytoplasmic stress granule, possibly by participating in the transport of neuronal RNA granules. Also acts as an innate immune sensor of infection by retroviruses, by detecting the presence of reverse-transcribed DNA in the cytosol. Directly binds retroviral reverse-transcribed DNA in the cytosol and interacts with CGAS, leading to activate the cGAS-STING signaling pathway, triggering type-I interferon production. The chain is Polyglutamine-binding protein 1 (PQBP1) from Bos taurus (Bovine).